The sequence spans 414 residues: Glyceraldehyde-3-phosphate dehydrogenase, chloroplastic (414 aa).

The transit peptide at 1 to 76 (MAFVAPVATV…GIVAATFGPT (76 aa)) directs the protein to the chloroplast. NADP(+)-binding positions include 88–89 (RI), aspartate 112, and arginine 156. D-glyceraldehyde 3-phosphate is bound by residues 230–232 (SCT), threonine 261, arginine 276, 289–290 (TG), and arginine 312. Cysteine 231 functions as the Nucleophile in the catalytic mechanism. Asparagine 394 contributes to the NADP(+) binding site.

This sequence belongs to the glyceraldehyde-3-phosphate dehydrogenase family. In terms of assembly, homotetramer.

It localises to the plastid. Its subcellular location is the chloroplast. The catalysed reaction is D-glyceraldehyde 3-phosphate + phosphate + NADP(+) = (2R)-3-phospho-glyceroyl phosphate + NADPH + H(+). The protein operates within carbohydrate biosynthesis; Calvin cycle. This chain is Glyceraldehyde-3-phosphate dehydrogenase, chloroplastic (GAPA), found in Chondrus crispus (Carrageen Irish moss).